The sequence spans 302 residues: UDP-3-O-acyl-N-acetylglucosamine deacetylase (302 aa).

Histidine 82, histidine 238, and aspartate 242 together coordinate Zn(2+). Histidine 265 (proton donor) is an active-site residue.

The protein belongs to the LpxC family. Requires Zn(2+) as cofactor.

It carries out the reaction a UDP-3-O-[(3R)-3-hydroxyacyl]-N-acetyl-alpha-D-glucosamine + H2O = a UDP-3-O-[(3R)-3-hydroxyacyl]-alpha-D-glucosamine + acetate. Its pathway is glycolipid biosynthesis; lipid IV(A) biosynthesis; lipid IV(A) from (3R)-3-hydroxytetradecanoyl-[acyl-carrier-protein] and UDP-N-acetyl-alpha-D-glucosamine: step 2/6. Its function is as follows. Catalyzes the hydrolysis of UDP-3-O-myristoyl-N-acetylglucosamine to form UDP-3-O-myristoylglucosamine and acetate, the committed step in lipid A biosynthesis. The sequence is that of UDP-3-O-acyl-N-acetylglucosamine deacetylase from Leptospira biflexa serovar Patoc (strain Patoc 1 / Ames).